Reading from the N-terminus, the 412-residue chain is Putative odorant receptor 85d (412 aa).

The Cytoplasmic portion of the chain corresponds to 1 to 56; it reads MLTKKDTQSAKEQEKLKAIPLHSFLKYANVFYLSIGMMAYDHKYSQKWKEVLLHWT. The chain crosses the membrane as a helical span at residues 57 to 77; that stretch reads FIAQMVNLNTVLISELIYVFL. The Extracellular portion of the chain corresponds to 78–84; sequence AIGKGSN. A helical transmembrane segment spans residues 85 to 105; the sequence is FLEATMNLSFIGFVIVGDFKI. Residues 106–152 are Cytoplasmic-facing; that stretch reads WNISRQRKRLTQVVSRLEELHPQGLAQQEPYNIGHHLSGYSRYSKFY. The chain crosses the membrane as a helical span at residues 153-173; that stretch reads FGMHMVLIWTYNLYWAVYYLV. Residues 174–219 lie on the Extracellular side of the membrane; that stretch reads CDFWLGMRQFERMLPYYCWVPWDWSTGYSYYFMYISQNIGGQACLS. The chain crosses the membrane as a helical span at residues 220–240; it reads GQLAADMLMCALVTLVVMHFI. The Cytoplasmic segment spans residues 241 to 282; it reads RLSAHIESHVAGIGSFQHDLEFLQATVAYHQSLIHLCQDINE. A helical membrane pass occupies residues 283–303; sequence IFGVSLLSNFVSSSFIICFVG. The Extracellular segment spans residues 304–314; that stretch reads FQMTIGSKIDN. A helical membrane pass occupies residues 315 to 335; the sequence is LVMLVLFLFCAMVQVFMIATH. The Cytoplasmic portion of the chain corresponds to 336-382; it reads AQRLVDASEQIGQAVYNHDWFRADLRYRKMLILIIKRAQQPSRLKAT. A helical transmembrane segment spans residues 383 to 403; sequence MFLNISLVTVSDLLQLSYKFF. At 404 to 412 the chain is on the extracellular side; it reads ALLRTMYVN.

This sequence belongs to the insect chemoreceptor superfamily. Heteromeric odorant receptor channel (TC 1.A.69) family. Or49a subfamily. In terms of assembly, interacts with Orco. Complexes exist early in the endomembrane system in olfactory sensory neurons (OSNs), coupling these complexes to the conserved ciliary trafficking pathway. In terms of tissue distribution, expressed in olfactory sensory neurons in the maxillary palp.

The protein resides in the cell membrane. In terms of biological role, odorant receptor which mediates acceptance or avoidance behavior, depending on its substrates. The odorant receptor repertoire encodes a large collection of odor stimuli that vary widely in identity, intensity, and duration. May form a complex with Orco to form odorant-sensing units, providing sensitive and prolonged odorant signaling and calcium permeability. In Drosophila melanogaster (Fruit fly), this protein is Putative odorant receptor 85d (Or85d).